Consider the following 788-residue polypeptide: Endonuclease MutS2 (788 aa).

332–339 (GPNTGGKT) contributes to the ATP binding site. Residues 713–788 (VDLRGMDAEE…GTGVTVVEIK (76 aa)) form the Smr domain.

This sequence belongs to the DNA mismatch repair MutS family. MutS2 subfamily. Homodimer. Binds to stalled ribosomes, contacting rRNA.

Functionally, endonuclease that is involved in the suppression of homologous recombination and thus may have a key role in the control of bacterial genetic diversity. In terms of biological role, acts as a ribosome collision sensor, splitting the ribosome into its 2 subunits. Detects stalled/collided 70S ribosomes which it binds and splits by an ATP-hydrolysis driven conformational change. Acts upstream of the ribosome quality control system (RQC), a ribosome-associated complex that mediates the extraction of incompletely synthesized nascent chains from stalled ribosomes and their subsequent degradation. Probably generates substrates for RQC. The sequence is that of Endonuclease MutS2 from Clostridium botulinum (strain Loch Maree / Type A3).